The primary structure comprises 511 residues: 2-isopropylmalate synthase (511 aa).

The 264-residue stretch at 6–269 folds into the Pyruvate carboxyltransferase domain; it reads IIIFDTTLRD…YTDIKCENIF (264 aa). Mn(2+)-binding residues include D15, H203, H205, and N239. The regulatory domain stretch occupies residues 394–511; it reads VIEKLSVISG…SLKVEERKMA (118 aa).

This sequence belongs to the alpha-IPM synthase/homocitrate synthase family. LeuA type 1 subfamily. In terms of assembly, homodimer. The cofactor is Mn(2+).

The protein resides in the cytoplasm. The catalysed reaction is 3-methyl-2-oxobutanoate + acetyl-CoA + H2O = (2S)-2-isopropylmalate + CoA + H(+). The protein operates within amino-acid biosynthesis; L-leucine biosynthesis; L-leucine from 3-methyl-2-oxobutanoate: step 1/4. Catalyzes the condensation of the acetyl group of acetyl-CoA with 3-methyl-2-oxobutanoate (2-ketoisovalerate) to form 3-carboxy-3-hydroxy-4-methylpentanoate (2-isopropylmalate). The polypeptide is 2-isopropylmalate synthase (Campylobacter jejuni (strain RM1221)).